We begin with the raw amino-acid sequence, 121 residues long: Basic phospholipase A2 homolog zhaoermiatoxin (121 aa).

Cystine bridges form between cysteine 26–cysteine 115, cysteine 28–cysteine 44, cysteine 43–cysteine 95, cysteine 49–cysteine 121, cysteine 50–cysteine 88, cysteine 57–cysteine 81, and cysteine 75–cysteine 86.

It belongs to the phospholipase A2 family. Group II subfamily. R49 sub-subfamily. In terms of assembly, homodimer. As to expression, expressed by the venom gland.

The protein localises to the secreted. Snake venom phospholipase A2 homolog that induces myonecrosis, and edema. Has low myotoxic activity. The chain is Basic phospholipase A2 homolog zhaoermiatoxin from Protobothrops mangshanensis (Mangshan pitviper).